The primary structure comprises 2225 residues: MNMSRQGIFQTVGSGLDHILSLADIEEEQMIQSVDRTAVTGASYFTSVDQSSVHTAEVGSHQIEPLKTSVDKPGSKKTQGEKFFLIHSADWLTTHALFHEVAKLDVVKLLYNEQFAVQGLLRYHTYARFGIEIQVQINPTPFQQGGLICAMVPGDQSYGSIASLTVYPHGLLNCNINNVVRIKVPFIYTRGAYHFKDPQYPVWELTIRVWSELNIGTGTSAYTSLNVLARFTDLELHGLTPLSTQMMRNEFRVSTTENVVNLSNYEDARAKMSFALDQEDWKSDPSQGGGIKITHFTTWTSIPTLAAQFPFNASDSVGQQIKVIPVDPYFFQMTNSNPDQKCITALASICQMFCFWRGDLVFDFQVFPTKYHSGRLLFCFVPGNELIDVSGITLKQATTAPCAVMDIAGVQSTLRFRVPWIPDTRYRVNRYTKSAHQKGEYTAIGKLIVYCYNRLTSPSNVASHVRVNVYLSAINLECFAPLYHAMDVTTQVGDDSGGFSTTVSTEQNVPDPQVGITTMRDLKGKANRGKMDVSGVQAPVGAITTIEDPVLAKKVPETFPELKPGESRHTSDHMSIYKFMGRSHFLCTFTFNSNNKEYTFPITLSSTSNPPHGLPSTLRWFFNLFQLYRGPLDLTIIITGATDVDGMAWFTPVGLAVDTPWVEKESALSIDYKTALGAVRFNTRRTGNIQIRLPWYSYLYAVSGALDGLGDKTDSTFGLVSIQIANYNHSDEYLSFSCYLSVTEQSEFYFPRAPLNSNAMLSTETMMSRIAAGDLESSVDDPRSEEDRRFESHIESRKPYKELRLEVGKQRLKYAQEELSNEVLPPPRKMKGLFSQAKISLFYTEEHEIMKFSWRGVTADTRALRRFGFSLAAGRSVWTLEMDAGVLTGRLVRLNDEKWTEMKDDKIVSLVEKFTSNKHWSKVNFPHGMLDLEEIAANSKDFPNMSETDLCFLLHWLNPKKINLADRMLGLSGVQEIKEQGIGLIAECRTFLDSITGSLKSMMFGFHHSVTVDIVNIVLCFVKSGILLYVIQQLNQDEHSHIIGLLRVMNYADIGCSVISCGKVFSKMLETVFNWQMDSRMMELRTQSFSNWLRDICSGITIFKSFKDAIYWLYTKLKDFYDMNYGKKKDVLNVLKDNQQRIERAIEEADNFCMLQIQDVEKFEQFQKGVDLIQKLRTVHSMAQVDSSLMIHLSPLRDCIARVHQKLKNLGSINQAMVTRCEPVVCYLYGKRGGGKSLTSIALATKICKHYGVEPEKNIYTKPVASDYWDGYSGQLVCIIDDIGQNTTDEDWSDFCQLVSGCPMRLNMASLEEKGRHFSSPFIIATSNWSNPSPKTVYVKEAIDRRLHFKIEVKPASFFQNPHNDMLNVNLAKTSDAIKDMSCVDLIMDGHNISLMDLLSSLVMTVEIRKQNMTEFMELWSQGISDDDSAVAEFFQSFPSGEPSSSKLSGFFQSVTNHKWVAVGAAVGILGVLVGGWFVYKHFSRKEEEPIPTEGVYHGVTKPKQVIKLDADPVESQSTLEIAGLVRKNLVQFGVGEKNGCVRWVMNALGVKDDWLLVPSHAYKFEKDYEMMEFYFNRGGTYYSISAGNVVIQSLDVGFQDVVLMKVPTIPKFRDITEHFIKKGDVPRALNRLATLVTTVNGTPMLISEGPLKMEEKATYVHKKNDGTTVDLTVDQAWRGKGEGLPGMCGGALISSNQSIQNAILGIHVAGGNSILVAKLVTQEMFQNIDKKIESQRIMKVEFSQCSMNVVSKTLFKKSPIHHHIDKDMINFPAAMPFSRAEIDPMAVMLSKYSLPMVEEPEGYKDVSIFFQNKIMGKSILVDDFLDLDMAITGTPGIDAINMDSSPGFPYVQEKLTKRDLIWLHENGLLLGIHPRLAQRILFNTVMMENCSDLDVVFTTCPKDELRPLDKVLESKTRAIDACPLDYTILCRMYWGPAISYFHLNPGFHTGVAIGIDPDKQWDELFKTMIRFGDVGLDLDFSAFDASLSPFMIREAGRIMSEISGTPSHFGTALINTIIYSKHLLYNCCYHVYGSMPSGSPCTALLNSIINNINLYYVFAKIFRKSPVFFSQAVRILCYGDDVLVVFSRDIQIDNLDQIGQKIVHEFKELGMTATSADKTVPQLKPVSELTFLKRSFNLVEDRIRPAISEKTIWSLVAWQRSNAEFEQNLENAQWFAFMHGFEFYQKFYYFVQSCLEKEMIEYRLKSYDWWRMRFYDQCFVCDLS.

2 consecutive short sequence motifs ((L)YPX(n)L motif) follow at residues Y167–L171 and Y200–L205. Residues M766–Q836 form an involved in P1-2A pentamerization region. A helical transmembrane segment spans residues T1011–I1031. Residues I1043–E1070 are membrane-penetrating ability. A coiled-coil region spans residues K1127–F1152. An SF3 helicase domain is found at H1204 to M1366. G1230–S1237 lines the ATP pocket. A helical transmembrane segment spans residues W1460–Y1480. Y1497 is subject to O-(5'-phospho-RNA)-tyrosine. The Peptidase C3 domain maps to D1512 to F1726. Catalysis depends on for protease 3C activity residues H1561, D1601, and C1689. The RdRp catalytic domain maps to D1974–N2095.

Belongs to the picornaviridae polyprotein family. As to quaternary structure, homodimer. Homomultimer; probably interacts with membranes in a multimeric form. Seems to assemble into amyloid-like fibers. In terms of assembly, homodimer. Monomer. Interacts with protein 3CD. Interacts with host ACBD3. As to quaternary structure, interacts with protein 3AB. In terms of assembly, interacts with human MAVS. Homodimer; disulfide-linked. As to quaternary structure, homopentamer. Homooligomer. In terms of assembly, interacts with capsid protein VP2. Interacts with capsid protein VP3. Interacts with capsid protein VP1. Interacts with capsid protein VP3. As to quaternary structure, interacts with capsid protein VP1. Interacts with capsid protein VP2. In terms of processing, specific enzymatic cleavages by viral protease in vivo yield a variety of precursors and mature proteins. Polyprotein processing intermediates are produced, such as P1-2A which is a functional precursor of the structural proteins, VP0 which is a VP4-VP2 precursor, VP1-2A precursor, 3ABC precursor which is a stable and catalytically active precursor of 3A, 3B and 3C proteins, 3AB and 3CD precursors. The assembly signal 2A is removed from VP1-2A by a host protease, possibly host Cathepsin L. This cleavage occurs over a region of 3 amino-acids probably generating VP1 proteins with heterogeneous C-termini. During virion maturation, immature virions are rendered infectious following cleavage of VP0 into VP4 and VP2. This maturation seems to be an autocatalytic event triggered by the presence of RNA in the capsid and is followed by a conformational change of the particle. Post-translationally, the assembly signal 2A is removed from VP1-2A by a host protease, possibly host Cathepsin L in naked virions. This cleavage does not occur in enveloped virions. This cleavage occurs over a region of 3 amino-acids probably generating VP1 proteins with heterogeneous C-termini. In terms of processing, VPg is uridylylated prior to priming replication into VPg-pUpU. Unlike other picornaviruses, does not seem to be myristoylated.

The protein resides in the virion. The protein localises to the host endosome. It localises to the host multivesicular body. Its subcellular location is the host membrane. It is found in the host mitochondrion outer membrane. The protein resides in the host cytoplasm. The protein localises to the host cytoplasmic vesicle membrane. It catalyses the reaction RNA(n) + a ribonucleoside 5'-triphosphate = RNA(n+1) + diphosphate. The enzyme catalyses a ribonucleoside 5'-triphosphate + H2O = a ribonucleoside 5'-diphosphate + phosphate + H(+). The catalysed reaction is Selective cleavage of Gln-|-Gly bond in the poliovirus polyprotein. In other picornavirus reactions Glu may be substituted for Gln, and Ser or Thr for Gly.. Functionally, capsid proteins VP1, VP2, and VP3 form a closed capsid enclosing the viral positive strand RNA genome. All these proteins contain a beta-sheet structure called beta-barrel jelly roll. Together they form an icosahedral capsid (T=3) composed of 60 copies of each VP1, VP2, and VP3, with a diameter of approximately 300 Angstroms. VP1 is situated at the 12 fivefold axes, whereas VP2 and VP3 are located at the quasi-sixfold axes. The naked capsid interacts with the host receptor HAVCR1 to provide virion attachment to and probably entry into the target cell. In terms of biological role, VP0 precursor is a component of the immature procapsids. Its function is as follows. Plays a role in the assembly of the 12 pentamers into an icosahedral structure. Has not been detected in mature virions, supposedly owing to its small size. Precursor component of immature procapsids that corresponds to an extended form of the structural protein VP1. After maturation, possibly by the host Cathepsin L, the assembly signal 2A is cleaved to give rise to the mature VP1 protein. Functionally, functions as a viroporin. Affects membrane integrity and causes an increase in membrane permeability. Involved in host intracellular membrane rearrangements probably to give rise to the viral factories. Does not disrupt calcium homeostasis or glycoprotein trafficking. Antagonizes the innate immune response of the host by suppressing IFN-beta synthesis, which it achieves by interfering with the RIG-I/IFIH1 pathway. In terms of biological role, affects membrane integrity and causes an increase in membrane permeability. Its function is as follows. Associates with and induces structural rearrangements of intracellular membranes. Displays RNA-binding activity. The precursor 3ABC is targeted to the mitochondrial membrane where protease 3C activity cleaves and inhibits the host antiviral protein MAVS, thereby disrupting activation of IRF3 through the IFIH1/MDA5 pathway. In vivo, the protease activity of 3ABC precursor is more efficient in cleaving the 2BC precursor than that of protein 3C. The 3ABC precursor may therefore play a role in the proteolytic processing of the polyprotein. Possible viroporin. Functionally, interacts with the 3CD precursor and with RNA structures found at both the 5'- and 3'-termini of the viral genome. Since the 3AB precursor contains the hydrophobic domain 3A, it probably anchors the whole viral replicase complex to intracellular membranes on which viral RNA synthesis occurs. In terms of biological role, may serve as membrane anchor to the 3AB and 3ABC precursors via its hydrophobic domain. May interact with RNA. Its function is as follows. Acts as a primer for viral RNA replication and remains covalently bound to viral genomic RNA. VPg is uridylylated prior to priming replication into VPg-pUpU. The VPg-pUpU is then used as primer on the genomic RNA poly(A) by the RNA-dependent RNA polymerase to replicate the viral genome. Cysteine protease that generates mature viral proteins from the precursor polyprotein. In addition to its proteolytic activity, it binds to viral RNA, and thus influences viral genome replication. RNA and substrate bind cooperatively to the protease. Cleaves IKBKG/NEMO to impair innate immune signaling. Cleaves host PABPC1 which may participate in the switch of viral translation to RNA synthesis. Functionally, interacts with the 3AB precursor and with RNA structures found at both the 5'- and 3'-termini of the viral genome. Disrupts TLR3 signaling by degrading the host adapter protein TICAM1/TRIF. In terms of biological role, RNA-directed RNA polymerase 3D-POL replicates genomic and antigenomic RNA by recognizing replications specific signals. The protein is Genome polyprotein of Homo sapiens (Human).